The sequence spans 261 residues: Proliferating cell nuclear antigen (261 aa).

Positions 7–100 are interaction with NUDT15; sequence VQGSILKKVL…RAEDNADTLA (94 aa). Residues lysine 14, lysine 77, and lysine 80 each carry the N6-acetyllysine modification. A DNA-binding region spans residues 61–80; the sequence is RCDRNLAMGVNLTSMSKILK. An intrachain disulfide couples cysteine 135 to cysteine 162. A Glycyl lysine isopeptide (Lys-Gly) (interchain with G-Cter in SUMO2); alternate cross-link involves residue lysine 164. Lysine 164 is covalently cross-linked (Glycyl lysine isopeptide (Lys-Gly) (interchain with G-Cter in ubiquitin); alternate). Tyrosine 211 carries the phosphotyrosine; by EGFR modification. Lysine 248 carries the N6-acetyllysine modification. A Glycyl lysine isopeptide (Lys-Gly) (interchain with G-Cter in SUMO2) cross-link involves residue lysine 254.

It belongs to the PCNA family. Homotrimer. Interacts with p300/EP300; the interaction occurs on chromatin in UV-irradiated damaged cells. Interacts with CREBBP (via transactivation domain and C-terminus); the interaction occurs on chromatin in UV-irradiated damaged cells. Directly interacts with POLD1, POLD3 and POLD4 subunits of the DNA polymerase delta complex, POLD3 being the major interacting partner; the interaction with POLD3 is inhibited by CDKN1A/p21(CIP1). Forms a complex with activator 1 heteropentamer in the presence of ATP. Interacts with EXO1, POLH, POLK, DNMT1, ERCC5, FEN1, CDC6 and POLDIP2. Interacts with POLB. Interacts with APEX2; this interaction is triggered by reactive oxygen species and increased by misincorporation of uracil in nuclear DNA. Forms a ternary complex with DNTTIP2 and core histone. Interacts with KCTD10 and PPP1R15A. Interacts with SMARCA5/SNF2H. Interacts with BAZ1B/WSTF; the interaction is direct and is required for BAZ1B/WSTF binding to replication foci during S phase. Interacts with HLTF and SHPRH. Interacts with NUDT15; this interaction is disrupted in response to UV irradiation and acetylation. Interacts with CDKN1A/p21(CIP1) and CDT1; interacts via their PIP-box which also recruits the DCX(DTL) complex. The interaction with CDKN1A inhibits POLD3 binding. Interacts with DDX11. Interacts with EGFR; positively regulates PCNA. Interacts with PARPBP. Interacts (when ubiquitinated) with SPRTN; leading to enhance RAD18-mediated PCNA ubiquitination. Interacts (when polyubiquitinated) with ZRANB3. Interacts with SMARCAD1. Interacts with CDKN1C. Interacts with PCLAF (via PIP-box). Interacts with RTEL1 (via PIP-box); the interaction is direct and essential for the suppression of telomere fragility. Interacts with FAM111A (via PIP-box); the interaction is direct and required for PCNA loading on chromatin binding. Interacts with LIG1. Interacts with SETMAR. Interacts with ANKRD17. Interacts with FBXO18/FBH1 (via PIP-box); the interaction recruits the DCX(DTL) complex and promotes ubiquitination and degradation of FBXO18/FBH1. Interacts with POLN. Interacts with SDE2 (via PIP-box); the interaction is direct and prevents ultraviolet light induced monoubiquitination. Component of the replisome complex composed of at least DONSON, MCM2, MCM7, PCNA and TICRR; interaction at least with PCNA occurs during DNA replication. Interacts with MAPK15; the interaction is chromatin binding dependent and prevents MDM2-mediated PCNA destruction by inhibiting the association of PCNA with MDM2. Interacts with PARP10 (via PIP-box). Interacts with DDI2. Interacts with HMCES (via PIP-box). Interacts with TRAIP (via PIP-box). Interacts with UHRF2. Interacts with ALKBH2; this interaction is enhanced during the S-phase of the cell cycle. Interacts with ATAD5; the interaction promotes USP1-mediated PCNA deubiquitination. Interacts with DNA damage up-regulated protein DDUP. Interacts (when phosphorylated) with GRB2. Interacts with ANG. Interacts with nuclear UNG (isoform 2); this interaction mediates UNG recruitment to S-phase replication foci. Interacts with ERCC6L2 (via an atypical PIP-box); this interaction facilitates cenrtomeric localization of ERCC6L2. In terms of assembly, (Microbial infection) Interacts with herpes virus 8 protein LANA1. Phosphorylated. Phosphorylation at Tyr-211 by EGFR stabilizes chromatin-associated PCNA. Post-translationally, acetylated by CREBBP and p300/EP300; preferentially acetylated by CREBBP on Lys-80, Lys-13 and Lys-14 and on Lys-77 by p300/EP300 upon loading on chromatin in response to UV irradiation. Lysine acetylation disrupts association with chromatin, hence promoting PCNA ubiquitination and proteasomal degradation in response to UV damage in a CREBBP- and EP300-dependent manner. Acetylation disrupts interaction with NUDT15 and promotes degradation. In terms of processing, ubiquitinated. Following DNA damage, can be either monoubiquitinated to stimulate direct bypass of DNA lesions by specialized DNA polymerases or polyubiquitinated to promote recombination-dependent DNA synthesis across DNA lesions by template switching mechanisms. Following induction of replication stress, monoubiquitinated by the UBE2B-RAD18 complex on Lys-164, leading to recruit translesion (TLS) polymerases, which are able to synthesize across DNA lesions in a potentially error-prone manner. An error-free pathway also exists and requires non-canonical polyubiquitination on Lys-164 through 'Lys-63' linkage of ubiquitin moieties by the E2 complex UBE2N-UBE2V2 and the E3 ligases, HLTF, RNF8 and SHPRH. This error-free pathway, also known as template switching, employs recombination mechanisms to synthesize across the lesion, using as a template the undamaged, newly synthesized strand of the sister chromatid. Monoubiquitination at Lys-164 also takes place in undamaged proliferating cells, and is mediated by the DCX(DTL) complex, leading to enhance PCNA-dependent translesion DNA synthesis. Sumoylated during S phase. Methylated on glutamate residues by ARMT1/C6orf211.

The protein resides in the nucleus. In terms of biological role, auxiliary protein of DNA polymerase delta and epsilon, is involved in the control of eukaryotic DNA replication by increasing the polymerase's processibility during elongation of the leading strand. Induces a robust stimulatory effect on the 3'-5' exonuclease and 3'-phosphodiesterase, but not apurinic-apyrimidinic (AP) endonuclease, APEX2 activities. Has to be loaded onto DNA in order to be able to stimulate APEX2. Plays a key role in DNA damage response (DDR) by being conveniently positioned at the replication fork to coordinate DNA replication with DNA repair and DNA damage tolerance pathways. Acts as a loading platform to recruit DDR proteins that allow completion of DNA replication after DNA damage and promote postreplication repair: Monoubiquitinated PCNA leads to recruitment of translesion (TLS) polymerases, while 'Lys-63'-linked polyubiquitination of PCNA is involved in error-free pathway and employs recombination mechanisms to synthesize across the lesion. The chain is Proliferating cell nuclear antigen (PCNA) from Homo sapiens (Human).